The sequence spans 1670 residues: Protein TASOR (1670 aa).

Residues 1–110 (MATAVETEAC…QIPRKSREKK (110 aa)) form a disordered region. Position 2 is an N-acetylalanine (Ala2). Residues 67–78 (QSLSHEQPQDSS) show a composition bias toward polar residues. The residue at position 344 (Ser344) is a Phosphoserine. A Glycyl lysine isopeptide (Lys-Gly) (interchain with G-Cter in SUMO2) cross-link involves residue Lys586. 4 positions are modified to phosphoserine: Ser633, Ser636, Ser673, and Ser800. Glycyl lysine isopeptide (Lys-Gly) (interchain with G-Cter in SUMO2) cross-links involve residues Lys823 and Lys832. Position 843 is a phosphoserine (Ser843). Lys872 participates in a covalent cross-link: Glycyl lysine isopeptide (Lys-Gly) (interchain with G-Cter in SUMO2). The segment at 921 to 947 (TGGNARSPEDQLGKHGEKQTPGMKSPE) is disordered. Ser927, Ser971, and Ser979 each carry phosphoserine. A compositionally biased stretch (basic and acidic residues) spans 927 to 938 (SPEDQLGKHGEK). Phosphothreonine is present on residues Thr982 and Thr1049. The residue at position 1103 (Ser1103) is a Phosphoserine. Basic and acidic residues predominate over residues 1532 to 1545 (ETKGSRGTDQKKNT). Disordered stretches follow at residues 1532–1558 (ETKGSRGTDQKKNTQIELQSSPDVQNS) and 1638–1670 (FLSAYTESLDRDKSPPPLSWGKSDSSRPYSQEK). Composition is skewed to polar residues over residues 1546 to 1558 (QIELQSSPDVQNS) and 1659 to 1670 (KSDSSRPYSQEK). Residue Ser1552 is modified to Phosphoserine.

The protein belongs to the TASOR family. In terms of assembly, component of the HUSH complex; at least composed of TASOR, PPHLN1 and MPHOSPH8. Interacts with MORC2; the interaction associateS MORC2 with the HUSH complex which recruits MORC2 to heterochromatic loci. Interacts with ZNF638; leading to recruitment of the HUSH complex to unintegrated retroviral DNA. Interacts with INPP5A, EML1, SV1L, GPSM2, ITGB3BP, CNTN1, ETFA, PSMD8, S100A10, MPHOSPH8, TMEM100, ALB, PARPBP, HCFC2, NCBP1 and SETDB1.

It localises to the nucleus. The protein localises to the chromosome. Its function is as follows. Component of the HUSH complex, a multiprotein complex that mediates epigenetic repression. The HUSH complex is recruited to genomic loci rich in H3K9me3 and is required to maintain transcriptional silencing by promoting recruitment of SETDB1, a histone methyltransferase that mediates further deposition of H3K9me3, as well as MORC2. Also represses L1 retrotransposons in collaboration with MORC2 and, probably, SETDB1, the silencing is dependent of repressive epigenetic modifications, such as H3K9me3 mark. Silencing events often occur within introns of transcriptionally active genes, and lead to the down-regulation of host gene expression. The HUSH complex is also involved in the silencing of unintegrated retroviral DNA by being recruited by ZNF638: some part of the retroviral DNA formed immediately after infection remains unintegrated in the host genome and is transcriptionally repressed. Plays a crucial role in early embryonic development. Involved in the organization of spindle poles and spindle apparatus assembly during zygotic division. Plays an important role in maintaining epiblast fitness or potency. This is Protein TASOR from Homo sapiens (Human).